Reading from the N-terminus, the 301-residue chain is uncharacterized protein (301 aa).

Residues S44 and Y107 each act as charge relay system in the active site. Y133 functions as the Proton donor in the catalytic mechanism. The Schiff-base intermediate with substrate role is filled by K162.

This sequence belongs to the DapA family. As to quaternary structure, homotetramer.

It localises to the cytoplasm. This is an uncharacterized protein from Pyrobaculum aerophilum (strain ATCC 51768 / DSM 7523 / JCM 9630 / CIP 104966 / NBRC 100827 / IM2).